We begin with the raw amino-acid sequence, 368 residues long: Polymerase delta-interacting protein 2 (368 aa).

The transit peptide at 1–21 (MAGCVARRALAVGSRWWSRSL) directs the protein to the mitochondrion. In terms of domain architecture, ApaG spans 235–360 (RETTENIRVT…FSLESNKDEK (126 aa)). Phosphothreonine is present on threonine 292.

In terms of assembly, interacts with PCNA and POLD2. Interacts with SSBP1. Interacts with PRIMPOL; leading to enhance DNA polymerase activity of PRIMPOL. Interacts with POLH. Interacts with POLD1; leading to stimulate DNA polymerase activity of POLD1.

It localises to the mitochondrion matrix. It is found in the nucleus. Functionally, involved in DNA damage tolerance by regulating translesion synthesis (TLS) of templates carrying DNA damage lesions such as 8oxoG and abasic sites. May act by stimulating activity of DNA polymerases involved in TLS, such as PRIMPOL and polymerase delta (POLD1). The chain is Polymerase delta-interacting protein 2 from Mus musculus (Mouse).